Reading from the N-terminus, the 83-residue chain is Small ribosomal subunit protein bS21 (83 aa).

Residues 40–83 form a disordered region; sequence TPMDERRRKARSASKRNKVKWRYSNKSEETASETAETPASAPEA. The span at 47 to 62 shows a compositional bias: basic residues; sequence RKARSASKRNKVKWRY. Positions 71–83 are enriched in low complexity; sequence SETAETPASAPEA.

The protein belongs to the bacterial ribosomal protein bS21 family.

This Akkermansia muciniphila (strain ATCC BAA-835 / DSM 22959 / JCM 33894 / BCRC 81048 / CCUG 64013 / CIP 107961 / Muc) protein is Small ribosomal subunit protein bS21.